Consider the following 195-residue polypeptide: Protein lin-28 homolog A (195 aa).

The CSD domain maps to 33 to 106 (QGSGVCKWFN…GLESTRVTGP (74 aa)). A disordered region spans residues 98–126 (LESTRVTGPGGAPCIGSERRPKVKGQQKR). A flexible linker region spans residues 107 to 130 (GGAPCIGSERRPKVKGQQKRRQKG). 2 CCHC-type zinc fingers span residues 131–148 (DRCYNCGGLDHHAKECKL) and 153–170 (KKCHFCQSPNHMVAQCPA). Zn(2+)-binding residues include cysteine 133, cysteine 136, histidine 141, cysteine 146, cysteine 155, cysteine 158, histidine 163, and cysteine 168. A disordered region spans residues 175-195 (AANLEEQPISEEQELIPETME). Residues 182 to 195 (PISEEQELIPETME) are compositionally biased toward acidic residues.

This sequence belongs to the lin-28 family. Monomer.

The protein localises to the cytoplasm. Its subcellular location is the rough endoplasmic reticulum. It is found in the P-body. It localises to the stress granule. The protein resides in the nucleus. The protein localises to the nucleolus. Functionally, RNA-binding protein that inhibits processing of pre-let-7 miRNAs and regulates translation of mRNAs that control developmental timing, pluripotency and metabolism. Seems to recognize a common structural G-quartet (G4) feature in its miRNA and mRNA targets. 'Translational enhancer' that drives specific mRNAs to polysomes and increases the efficiency of protein synthesis. Its association with the translational machinery and target mRNAs results in an increased number of initiation events per molecule of mRNA and, indirectly, in mRNA stabilization. Suppressor of microRNA (miRNA) biogenesis, including that of let-7. Binds specific target miRNA precursors (pre-miRNAs), recognizing an 5'-GGAG-3' motif found in their terminal loop, and recruits uridylyltransferase. This results in the terminal uridylation of target pre-miRNAs. Uridylated pre-miRNAs fail to be processed by Dicer and undergo degradation. Localized to the periendoplasmic reticulum area, binds to a large number of spliced mRNAs and inhibits the translation of mRNAs destined for the ER, reducing the synthesis of transmembrane proteins, ER or Golgi lumen proteins, and secretory proteins. Binds to and enhances the translation of mRNAs for several metabolic enzymes, increasing glycolysis and oxidative phosphorylation. Which, with the let-7 repression may enhance tissue repair in adult tissue. The polypeptide is Protein lin-28 homolog A (lin28a) (Xenopus tropicalis (Western clawed frog)).